A 163-amino-acid chain; its full sequence is Keratin-associated protein 11-1 (163 aa).

4 tandem repeats follow at residues 111–120 (CQPLGGISSV), 121–130 (CQPVGGISTV), 131–140 (CQPVGGVSTV), and 141–150 (CQPACGVSRT). Positions 111–150 (CQPLGGISSVCQPVGGISTVCQPVGGVSTVCQPACGVSRT) are 4 X 10 AA approximate repeats.

This sequence belongs to the PMG family. In terms of tissue distribution, expressed in the upper matrix and in the entire hair cortex.

Functionally, in the hair cortex, hair keratin intermediate filaments are embedded in an interfilamentous matrix, consisting of hair keratin-associated proteins (KRTAP), which are essential for the formation of a rigid and resistant hair shaft through their extensive disulfide bond cross-linking with abundant cysteine residues of hair keratins. The matrix proteins include the high-sulfur and high-glycine-tyrosine keratins. In Homo sapiens (Human), this protein is Keratin-associated protein 11-1 (KRTAP11-1).